A 166-amino-acid polypeptide reads, in one-letter code: Large ribosomal subunit protein bL19 (166 aa).

It belongs to the bacterial ribosomal protein bL19 family.

This protein is located at the 30S-50S ribosomal subunit interface and may play a role in the structure and function of the aminoacyl-tRNA binding site. This chain is Large ribosomal subunit protein bL19, found in Chelativorans sp. (strain BNC1).